Consider the following 186-residue polypeptide: Probable chorismate pyruvate-lyase (186 aa).

The substrate site is built by R78, L116, and E175.

The protein belongs to the UbiC family.

Its subcellular location is the cytoplasm. The enzyme catalyses chorismate = 4-hydroxybenzoate + pyruvate. It functions in the pathway cofactor biosynthesis; ubiquinone biosynthesis. In terms of biological role, removes the pyruvyl group from chorismate, with concomitant aromatization of the ring, to provide 4-hydroxybenzoate (4HB) for the ubiquinone pathway. This Psychromonas ingrahamii (strain DSM 17664 / CCUG 51855 / 37) protein is Probable chorismate pyruvate-lyase.